The primary structure comprises 150 residues: Geranyl diphosphate phosphohydrolase (150 aa).

Residues 14–147 (SIKVAVVVCL…DNVVQDGFNP (134 aa)) enclose the Nudix hydrolase domain. The Nudix box signature appears at 48 to 69 (GHLEFGESFEECAARELKEETD). Positions 63 and 67 each coordinate Mg(2+).

It belongs to the Nudix hydrolase family. Expressed in petals. Little or no expression in stamens, sepals or young leaves.

It localises to the cytoplasm. It catalyses the reaction (2E)-geranyl diphosphate + H2O = (2E)-geranyl phosphate + phosphate + H(+). Functionally, involved in a cytosolic pathway for the biosynthesis of free monoterpene alcohols that contribute to fragrance. Lacks terpene synthase activity, but has a diphosphohydrolase activity with geranyl diphosphate and farnesyl diphosphate as substrates. No activity with 8-oxo-dGTP and dGTP and unable to dephosphorylate geranyl phosphate to geraniol. In Rosa hybrid cultivar, this protein is Geranyl diphosphate phosphohydrolase.